A 4467-amino-acid polypeptide reads, in one-letter code: Protocadherin-like protein (4467 aa).

An N-terminal signal peptide occupies residues 1–22; the sequence is MRGINAIVGFLLCFCLLHRINT. Cadherin domains are found at residues 23-128, 129-238, 239-350, 351-455, 459-566, 567-664, 665-764, 765-884, 885-994, 1092-1197, 1290-1395, 1396-1499, 1495-1597, 1601-1701, 1793-1891, 1892-1992, 1993-2100, 2101-2202, 2203-2312, 2313-2423, 2425-2529, 2530-2639, 2640-2746, 2747-2849, 2850-2954, 2955-3062, 3063-3170, and 3173-3288; these read AVQF…SPTF, PQHL…SPVF, EKKS…VPVF, QEES…TPVF, NPQQ…NPDF, SKVV…PPTF, KNAP…PPTF, SRSS…SPEF, SQTS…PPLF, EAQP…QPRF, SRTV…SPKF, SADS…PPKF, GPPK…EPQF, SNGF…QPVR, TMID…KPQF, SESA…YPKF, EPNL…KPQF, LESD…RPVF, TDCP…FPFF, LTRT…PPAF, PSAV…TPTF, KLEE…PPIF, PKPS…IPKF, DNLI…SPYF, PNPP…APVF, NPRE…PPVF, VPAE…GPWF, and RYYE…EPFD. Residues 23-4258 are Extracellular-facing; sequence AVQFKQEILE…RPSSRWANPA (4236 aa). The EGF-like 1 domain maps to 3551 to 3589; that stretch reads PDINCTTGTPCLHGGTCHNAVPKGIICECGRDYLGPECQ. Intrachain disulfides connect Cys3555–Cys3567, Cys3561–Cys3577, Cys3579–Cys3588, Cys3762–Cys3788, Cys3794–Cys3803, Cys3797–Cys3812, and Cys3814–Cys3823. The 199-residue stretch at 3590-3788 folds into the Laminin G-like 1 domain; that stretch reads STTRTFRGNS…LKEVNTELGC (199 aa). One can recognise an EGF-like 2 domain in the interval 3790–3824; it reads LNNQCPNCNGRGYCEPFWNYAICVCDLGFGGANCD. A Laminin G-like 2 domain is found at 3842 to 4096; that stretch reads VKQVKRKRRE…KVIISSSGGS (255 aa). Positions 4089–4118 are disordered; the sequence is IISSSGGSVSGGSGGASGGSGGASGSGGSV. A compositionally biased stretch (gly residues) spans 4096–4118; the sequence is SVSGGSGGASGGSGGASGSGGSV. In terms of domain architecture, EGF-like 3 spans 4206–4238; that stretch reads PCGSNFCRHGGTCVSADPPYCLCPVGWSGPVCE. 3 cysteine pairs are disulfide-bonded: Cys4207–Cys4218, Cys4212–Cys4226, and Cys4228–Cys4237. A helical transmembrane segment spans residues 4259–4279; it reads VIACILVILLAILVIIGAVLL. Residues 4280–4467 lie on the Cytoplasmic side of the membrane; the sequence is KRRPQPAVVA…NLNRIFNEDE (188 aa). Positions 4424 to 4445 are disordered; sequence DVDDLSELGDSDEEPDEEEEQE.

As to expression, component of the acid-insoluble organic matrix of the aragonitic skeleton (at protein level).

It is found in the membrane. The polypeptide is Protocadherin-like protein (Acropora millepora (Staghorn coral)).